Consider the following 200-residue polypeptide: MSKYAGIVLAGGMSSRFGEPKALASWQGSTFIEHILKVMTSTLQEVVVISHSHIKERVEKLVQVPVIEDIPHYKGNGPLAGIVSGMEYIEADWYAIMPCDAPNVSHEWFTILLEQTSNEYDAVVPIINGRKQPLLAAYHNRVKEKIYTLLQEEKRSMGQLLSQCNVKYIAGEDIQANADWFINVNTKEEYVQAQKDLSNE.

Residues 9-11, Lys21, Asp69, and Asp100 each bind GTP; that span reads LAG. Asp100 contributes to the Mg(2+) binding site.

Belongs to the MobA family. It depends on Mg(2+) as a cofactor.

Its subcellular location is the cytoplasm. It catalyses the reaction Mo-molybdopterin + GTP + H(+) = Mo-molybdopterin guanine dinucleotide + diphosphate. In terms of biological role, transfers a GMP moiety from GTP to Mo-molybdopterin (Mo-MPT) cofactor (Moco or molybdenum cofactor) to form Mo-molybdopterin guanine dinucleotide (Mo-MGD) cofactor. This Bacillus cereus (strain AH187) protein is Probable molybdenum cofactor guanylyltransferase.